Here is a 76-residue protein sequence, read N- to C-terminus: ATP synthase subunit c (76 aa).

2 consecutive transmembrane segments (helical) span residues V7–I27 and F50–I70.

The protein belongs to the ATPase C chain family. F-type ATPases have 2 components, F(1) - the catalytic core - and F(0) - the membrane proton channel. F(1) has five subunits: alpha(3), beta(3), gamma(1), delta(1), epsilon(1). F(0) has four main subunits: a(1), b(1), b'(1) and c(10-14). The alpha and beta chains form an alternating ring which encloses part of the gamma chain. F(1) is attached to F(0) by a central stalk formed by the gamma and epsilon chains, while a peripheral stalk is formed by the delta, b and b' chains.

The protein resides in the cell membrane. In terms of biological role, f(1)F(0) ATP synthase produces ATP from ADP in the presence of a proton or sodium gradient. F-type ATPases consist of two structural domains, F(1) containing the extramembraneous catalytic core and F(0) containing the membrane proton channel, linked together by a central stalk and a peripheral stalk. During catalysis, ATP synthesis in the catalytic domain of F(1) is coupled via a rotary mechanism of the central stalk subunits to proton translocation. Its function is as follows. Key component of the F(0) channel; it plays a direct role in translocation across the membrane. A homomeric c-ring of between 10-14 subunits forms the central stalk rotor element with the F(1) delta and epsilon subunits. This chain is ATP synthase subunit c, found in Chloroflexus aurantiacus (strain ATCC 29366 / DSM 635 / J-10-fl).